The following is a 369-amino-acid chain: Queuine tRNA-ribosyltransferase (369 aa).

Asp89 (proton acceptor) is an active-site residue. Residues Asp89–Phe93, Asp142, Gln184, and Gly211 each bind substrate. Residues Gly242 to Leu248 are RNA binding. Asp261 (nucleophile) is an active-site residue. The segment at Thr266–Arg270 is RNA binding; important for wobble base 34 recognition. Zn(2+)-binding residues include Cys299, Cys301, Cys304, and His330.

The protein belongs to the queuine tRNA-ribosyltransferase family. In terms of assembly, homodimer. Within each dimer, one monomer is responsible for RNA recognition and catalysis, while the other monomer binds to the replacement base PreQ1. The cofactor is Zn(2+).

It carries out the reaction 7-aminomethyl-7-carbaguanine + guanosine(34) in tRNA = 7-aminomethyl-7-carbaguanosine(34) in tRNA + guanine. It participates in tRNA modification; tRNA-queuosine biosynthesis. Functionally, catalyzes the base-exchange of a guanine (G) residue with the queuine precursor 7-aminomethyl-7-deazaguanine (PreQ1) at position 34 (anticodon wobble position) in tRNAs with GU(N) anticodons (tRNA-Asp, -Asn, -His and -Tyr). Catalysis occurs through a double-displacement mechanism. The nucleophile active site attacks the C1' of nucleotide 34 to detach the guanine base from the RNA, forming a covalent enzyme-RNA intermediate. The proton acceptor active site deprotonates the incoming PreQ1, allowing a nucleophilic attack on the C1' of the ribose to form the product. After dissociation, two additional enzymatic reactions on the tRNA convert PreQ1 to queuine (Q), resulting in the hypermodified nucleoside queuosine (7-(((4,5-cis-dihydroxy-2-cyclopenten-1-yl)amino)methyl)-7-deazaguanosine). This is Queuine tRNA-ribosyltransferase from Thermotoga sp. (strain RQ2).